Consider the following 656-residue polypeptide: Spermatogenesis-associated protein 13 (656 aa).

Positions 1 to 12 (MHPASVTTTSQD) are enriched in polar residues. Residues 1–26 (MHPASVTTTSQDPCAPSGSCRGGRRR) form a disordered region. Ser82 is modified (phosphoserine). The tract at residues 85–115 (IGLDRVGRRRQMKTSNVSSDGGAESSALVDD) is disordered. The ABR (APC-binding region) domain stretch occupies residues 102-154 (SSDGGAESSALVDDNGSEEDFSYEELCQANPRYLQPGGEQLAINELISDGSVV). Residue Ser118 is modified to Phosphoserine. Residues 151 to 210 (GSVVCAEALWDHVTMDDQELGFKAGDVIQVLEASNKDWWWGRNEDKEAWFPASFVRLRVN) form the SH3 domain. Positions 215-242 (PENCSSSHGEEQDEDTSKARHKHPESQQ) are disordered. Residues 244 to 428 (MRTNVIQEIM…KNVACLINER (185 aa)) form the DH domain. The 107-residue stretch at 459–565 (ELIHSGELTK…WLQAYADERR (107 aa)) folds into the PH domain. Residues 565–656 (RRVQEDQQMG…TFHKLTPFRK (92 aa)) form a C-terminal tail region.

In terms of assembly, interacts (via ABR and SH3 domain) with APC. The binding of APC enhances its GEF activity by relieving it from an autoinhibitory conformation, in which the ABR and SH3 domains are associated with the C-terminal tail. Interacts (via C-terminal tail) with PPP1R9B (via C-terminus). Interacts with RAC1. In terms of tissue distribution, expression is aberrantly enhanced in most colorectal tumors.

The protein resides in the cytoplasm. The protein localises to the cell projection. It is found in the filopodium. Its subcellular location is the lamellipodium. It localises to the ruffle membrane. The protein resides in the podosome. Its activity is regulated as follows. Both the ABR and the SH3 domains contribute to maintaining the protein in an inhibited conformation by associating with the C-terminal tail. Binding of these domains to the C-terminal tail inhibits the activity of the protein by blocking a region that is required for its GEF activity. Functionally, acts as a guanine nucleotide exchange factor (GEF) for RHOA, RAC1 and CDC42 GTPases. Regulates cell migration and adhesion assembly and disassembly through a RAC1, PI3K, RHOA and AKT1-dependent mechanism. Increases both RAC1 and CDC42 activity, but decreases the amount of active RHOA. Required for MMP9 up-regulation via the JNK signaling pathway in colorectal tumor cells. Involved in tumor angiogenesis and may play a role in intestinal adenoma formation and tumor progression. This is Spermatogenesis-associated protein 13 (Spata13) from Mus musculus (Mouse).